Consider the following 318-residue polypeptide: Probable aminopeptidase YbaC (318 aa).

Residue serine 115 is the Nucleophile of the active site. The active site involves aspartate 266. The active-site Proton donor is the histidine 296.

The protein belongs to the peptidase S33 family.

Functionally, probable aminopeptidase. The sequence is that of Probable aminopeptidase YbaC (ybaC) from Bacillus subtilis (strain 168).